The primary structure comprises 432 residues: Glutamate-gated chloride channel subunit beta (432 aa).

The first 18 residues, 1-18, serve as a signal peptide directing secretion; it reads MSQYMMVAVAAVVAVAGS. Residues 19 to 249 are Extracellular-facing; the sequence is SQISRRSTGG…MQLTLKRQFS (231 aa). An N-linked (GlcNAc...) asparagine glycan is attached at Asn-52. L-glutamate-binding residues include Arg-69, Arg-88, and Ser-155. A disulfide bond links Cys-164 and Cys-178. Ser-184 is a binding site for L-glutamate. Asn-219 carries an N-linked (GlcNAc...) asparagine glycan. Cys-226 and Cys-237 are disulfide-bonded. Residues 250-272 form a helical membrane-spanning segment; that stretch reads YYLVQLYGPTTMIVIVSWVSFWI. The Cytoplasmic segment spans residues 273–277; the sequence is DMHST. The chain crosses the membrane as a helical span at residues 278 to 299; that stretch reads AGRVALGVTTLLTMTTMQAAIN. Over 300 to 306 the chain is Extracellular; that stretch reads AKLPPVS. A helical membrane pass occupies residues 307-327; it reads YVKVVDVWLGACQTFVFGALL. The Cytoplasmic segment spans residues 328 to 402; sequence EYAFVSYQDS…KPDYLPAKID (75 aa). The helical transmembrane segment at 403–426 threads the bilayer; it reads YYARFCVPLGFLAFNAIYWTSCLV. Topologically, residues 427–432 are extracellular; sequence MVSRLV.

It belongs to the ligand-gated ion channel (TC 1.A.9) family. Glutamate-gated chloride channel (TC 1.A.9.4) subfamily. As to quaternary structure, pentamer. In terms of tissue distribution, expressed in motor neuron commissures at the anterior portion of the worms.

Its subcellular location is the postsynaptic cell membrane. It is found in the cell membrane. In terms of biological role, glutamate-gated chloride channel subunit; channel properties may be modulated by the formation of heteromeric channels. Glutamate binding triggers a rapidly reversible current, while the anti-helmintic drug ivermectin triggers a permanently open channel configuration. The sequence is that of Glutamate-gated chloride channel subunit beta from Haemonchus contortus (Barber pole worm).